Consider the following 444-residue polypeptide: Ribosome biogenesis protein WDR12 homolog (444 aa).

The segment at 7–87 is ubiquitin-like (UBL) domain; the sequence is VLVKFVTKLP…ESTLEVEYVP (81 aa). A disordered region spans residues 91 to 123; it reads PPQQKNSTPHDDWVSSVDGSRCAPASSSGGSPS. WD repeat units lie at residues 105 to 148, 150 to 191, and 203 to 242; these read SSVD…VASV, AHAG…EEDA, and GHED…RWAA. Residues 243 to 264 are disordered; the sequence is GTAEASKKKRKTGTANGSAAAG. 4 WD repeats span residues 272–310, 312–352, 360–400, and 403–444; these read GHLH…AADT, NGSK…GSDA, AHGG…PLGM, and HHTD…YIVS.

Belongs to the WD repeat WDR12/YTM1 family.

The protein resides in the nucleus. Its subcellular location is the nucleolus. The protein localises to the nucleoplasm. Its function is as follows. Required for maturation of ribosomal RNAs and formation of the large ribosomal subunit. This chain is Ribosome biogenesis protein WDR12 homolog, found in Chlamydomonas reinhardtii (Chlamydomonas smithii).